Reading from the N-terminus, the 1293-residue chain is Phosphoribosylformylglycinamidine synthase (1293 aa).

Residues 305–316 (GAATGSGGEIRD) and Ala-676 contribute to the ATP site. Residues 305-327 (GAATGSGGEIRDEGATGRGSKPK) form a disordered region. Residues Asp-677, Glu-716, Asn-720, and Asp-884 each contribute to the Mg(2+) site. Ser-886 is an ATP binding site. One can recognise a Glutamine amidotransferase type-1 domain in the interval 1040 to 1293 (MAILREQGVN…MFRNARVNLG (254 aa)). The active-site Nucleophile is the Cys-1133. Active-site residues include His-1258 and Glu-1260.

This sequence in the N-terminal section; belongs to the FGAMS family. In terms of assembly, monomer.

The protein localises to the cytoplasm. It catalyses the reaction N(2)-formyl-N(1)-(5-phospho-beta-D-ribosyl)glycinamide + L-glutamine + ATP + H2O = 2-formamido-N(1)-(5-O-phospho-beta-D-ribosyl)acetamidine + L-glutamate + ADP + phosphate + H(+). It functions in the pathway purine metabolism; IMP biosynthesis via de novo pathway; 5-amino-1-(5-phospho-D-ribosyl)imidazole from N(2)-formyl-N(1)-(5-phospho-D-ribosyl)glycinamide: step 1/2. Phosphoribosylformylglycinamidine synthase involved in the purines biosynthetic pathway. Catalyzes the ATP-dependent conversion of formylglycinamide ribonucleotide (FGAR) and glutamine to yield formylglycinamidine ribonucleotide (FGAM) and glutamate. This Shewanella sp. (strain MR-4) protein is Phosphoribosylformylglycinamidine synthase.